We begin with the raw amino-acid sequence, 328 residues long: Eukaryotic translation initiation factor 3 subunit I (328 aa).

WD repeat units lie at residues 8-49 (GHER…GTYE), 50-89 (GHTGAIWTCDINKSSTLMVSGAADNTMRLWDVKTGKQLYK), 145-184 (TRESKATVAGWSYLSKFLFTGHEDGSVSRYDAITGEFVES), 189-228 (NSGSTITDLQFYPDRTYFITSCKDTTAKAIDVDSFEVIKT), and 286-327 (GHFG…FKYT).

It belongs to the eIF-3 subunit I family. In terms of assembly, component of the eukaryotic translation initiation factor 3 (eIF-3) complex. The eIF-3 complex appears to include tif32/eif3a, SPAC25G10.08/eif3b, tif33/eif3c, SPBC4C3.07/eif3f, tif35/eif3g and sum1/eif3i. This set of common subunits may also associate exclusively with either moe1/eif3d and int6/eif3e, or with SPAC821.05/eif3h and SPAC1751.03/eif3m. The eIF-3 complex may also include SPAC3A12.13c/eif3j.

Its subcellular location is the cytoplasm. The protein resides in the nucleus. Component of the eukaryotic translation initiation factor 3 (eIF-3) complex, which is involved in protein synthesis of a specialized repertoire of mRNAs and, together with other initiation factors, stimulates binding of mRNA and methionyl-tRNAi to the 40S ribosome. The eIF-3 complex specifically targets and initiates translation of a subset of mRNAs involved in cell proliferation. This chain is Eukaryotic translation initiation factor 3 subunit I (sum1), found in Schizosaccharomyces pombe (strain 972 / ATCC 24843) (Fission yeast).